A 288-amino-acid polypeptide reads, in one-letter code: T-cell-interacting, activating receptor on myeloid cells protein 1 (288 aa).

The first 16 residues, 1-16, serve as a signal peptide directing secretion; it reads MISRLLSLLCLRLCVG. Topologically, residues 17 to 258 are extracellular; that stretch reads QTDIPENGSP…EGYTVDNLIR (242 aa). Ig-like C2-type domains are found at residues 27–113 and 124–217; these read PKPS…HPSN and PQPS…LEIS. 2 disulfide bridges follow: Cys-49–Cys-97 and Cys-146–Cys-196. N-linked (GlcNAc...) asparagine glycosylation is found at Asn-74 and Asn-185. The helical transmembrane segment at 259–279 threads the bilayer; that stretch reads VGVAAAILLIVGGFLVEAWHS. At 280-288 the chain is on the cytoplasmic side; the sequence is ERLSPNKPW.

In terms of assembly, interacts with Fc receptor gamma chain FCER1G. Post-translationally, N-glycosylated. In terms of tissue distribution, expressed in lung, uterus, lymph nodes, spleen, thymus and bone marrow. Expressed in bone marrow CD11b(+)Gr-1(+) granulocyte precursors and mature neutrophils.

The protein localises to the cell membrane. In terms of biological role, may act as receptor. Negatively regulates TCR-mediated CD4(+) T cell proliferation and activation, possibly by binding an unknown ligand on the T cell surface. Enhances Toll-like receptor-mediated production of pro-inflammatory cytokines by macrophages and neutrophils. The polypeptide is T-cell-interacting, activating receptor on myeloid cells protein 1 (Tarm1) (Mus musculus (Mouse)).